A 450-amino-acid polypeptide reads, in one-letter code: E3 ubiquitin-protein ligase XB3 (450 aa).

ANK repeat units lie at residues 11-40, 46-75, 79-108, 113-142, 158-187, and 195-225; these read GDEH…SLAR, DRLS…PPDA, HKQT…NILM, HART…TTPV, HGAT…IVSA, and PGST…RLQR. Residues 291-312 form a disordered region; the sequence is ILNGTKYSLPSPSPGDDSADDD. An RING-type zinc finger spans residues 323-372; that stretch reads CCICFDQACTIEVQDCGHQMCAPCTLALCCHNKPNPTTLTPPSPACPFCR. Residues 385–450 are disordered; the sequence is SACDPDKPSS…SNLDKPEHDL (66 aa).

In terms of assembly, interacts (via ankyrin repeats) with XA21. Phosphorylated by XA21.

It catalyses the reaction S-ubiquitinyl-[E2 ubiquitin-conjugating enzyme]-L-cysteine + [acceptor protein]-L-lysine = [E2 ubiquitin-conjugating enzyme]-L-cysteine + N(6)-ubiquitinyl-[acceptor protein]-L-lysine.. Its pathway is protein modification; protein ubiquitination. In terms of biological role, E3 ubiquitin-protein ligase required for full accumulation of the LRR receptor kinase XA21 and XA21-mediated disease resistance. Binding to XA21 may stabilize the receptor kinase and maintain its protein level. Autoubiquitinated in vitro. The chain is E3 ubiquitin-protein ligase XB3 (XB3) from Oryza sativa subsp. japonica (Rice).